The following is an 84-amino-acid chain: MFQSTFFLVLMVCVATARFANKDHCPPNEEYNECGNPCQEKCDNGEPVICTYQCEHRCFCKQGYVRLTEDGECVPEEFCKPIHY.

The N-terminal stretch at 1 to 22 (MFQSTFFLVLMVCVATARFANK) is a signal peptide. 5 cysteine pairs are disulfide-bonded: Cys-25/Cys-58, Cys-34/Cys-54, Cys-38/Cys-50, Cys-42/Cys-79, and Cys-60/Cys-73. Residues 25 to 79 (CPPNEEYNECGNPCQEKCDNGEPVICTYQCEHRCFCKQGYVRLTEDGECVPEEFC) form the TIL domain.

This sequence belongs to the serine protease inhibitor-like (TIL domain-containing) family.

The protein localises to the secreted. Inhibits alpha-chymotrypsin, but not trypsin. This is Chymotrypsin inhibitor Ani s 6 from Anisakis simplex (Herring worm).